The following is an 829-amino-acid chain: Periplasmic nitrate reductase (829 aa).

The segment at residues 1-31 (MKLSRRDFMKANAVAAAAAAAGLTIPTVARA) is a signal peptide (tat-type signal). The 4Fe-4S Mo/W bis-MGD-type domain occupies 40–96 (ITWDKAPCRFCGTGCGVLVGTQNGRIVASQGDPDAPVNRGLNCIKGYFLPKIMYGKD). [4Fe-4S] cluster contacts are provided by cysteine 47, cysteine 50, cysteine 54, and cysteine 82. Mo-bis(molybdopterin guanine dinucleotide) contacts are provided by residues lysine 84, glutamine 151, asparagine 176, cysteine 180, 213-220 (WGSNMAEM), 263-265 (QSD), methionine 373, glutamine 377, asparagine 483, 509-510 (SD), lysine 532, aspartate 559, and 719-728 (TGRVLEHWHT). Phenylalanine 795 lines the substrate pocket. Residues asparagine 803 and lysine 820 each coordinate Mo-bis(molybdopterin guanine dinucleotide).

The protein belongs to the prokaryotic molybdopterin-containing oxidoreductase family. NasA/NapA/NarB subfamily. Component of the periplasmic nitrate reductase NapAB complex composed of NapA and NapB. Requires [4Fe-4S] cluster as cofactor. Mo-bis(molybdopterin guanine dinucleotide) serves as cofactor. Predicted to be exported by the Tat system. The position of the signal peptide cleavage has not been experimentally proven.

The protein localises to the periplasm. The catalysed reaction is 2 Fe(II)-[cytochrome] + nitrate + 2 H(+) = 2 Fe(III)-[cytochrome] + nitrite + H2O. Functionally, catalytic subunit of the periplasmic nitrate reductase complex NapAB. Receives electrons from NapB and catalyzes the reduction of nitrate to nitrite. The chain is Periplasmic nitrate reductase from Edwardsiella ictaluri (strain 93-146).